The sequence spans 334 residues: Malate dehydrogenase, cytoplasmic (334 aa).

11 to 17 (GAAGQIA) serves as a coordination point for NAD(+). Residues Arg92 and Arg98 each coordinate substrate. NAD(+) contacts are provided by residues Asn105, Gln112, and 129–131 (VGN). Substrate-binding residues include Asn131 and Arg162. His187 serves as the catalytic Proton acceptor.

This sequence belongs to the LDH/MDH superfamily. MDH type 2 family. Homodimer.

The protein resides in the cytoplasm. Its subcellular location is the cytosol. It carries out the reaction (S)-malate + NAD(+) = oxaloacetate + NADH + H(+). It catalyses the reaction (S)-2-hydroxyglutarate + NAD(+) = 2-oxoglutarate + NADH + H(+). In terms of biological role, catalyzes the reduction of aromatic alpha-keto acids in the presence of NADH. Plays essential roles in the malate-aspartate shuttle and the tricarboxylic acid cycle, important in mitochondrial NADH supply for oxidative phosphorylation. Catalyzes the reduction of 2-oxoglutarate to 2-hydroxyglutarate, leading to elevated reactive oxygen species (ROS). The polypeptide is Malate dehydrogenase, cytoplasmic (MDH1) (Gallus gallus (Chicken)).